Consider the following 20-residue polypeptide: Magnificalysin I (20 aa).

The segment at 1 to 10 (ALAGTIIAGA) is plays an important role in the hemolytic activity. Residues 9-20 (GASLTFKILDEV) are N-terminal region.

Belongs to the actinoporin family. Sea anemone subfamily. In terms of assembly, octamer or nonamer in membranes. Monomer in the soluble state.

The protein localises to the secreted. It localises to the nematocyst. The protein resides in the target cell membrane. Functionally, pore-forming protein that forms cations-selective hydrophilic pores of around 1 nm and causes cytolysis. Pore formation is a multi-step process that involves specific recognition of membrane sphingomyelin (but neither cholesterol nor phosphatidylcholine) using aromatic rich region and adjacent phosphocholine (POC) binding site, firm binding to the membrane (mainly driven by hydrophobic interactions) accompanied by the transfer of the N-terminal region to the lipid-water interface and finally pore formation after oligomerization of monomers. The polypeptide is Magnificalysin I (Heteractis magnifica (Magnificent sea anemone)).